The sequence spans 151 residues: Ribosome maturation factor RimP (151 aa).

Belongs to the RimP family.

It localises to the cytoplasm. In terms of biological role, required for maturation of 30S ribosomal subunits. This Thermoanaerobacter pseudethanolicus (strain ATCC 33223 / 39E) (Clostridium thermohydrosulfuricum) protein is Ribosome maturation factor RimP.